We begin with the raw amino-acid sequence, 614 residues long: High-affinity choline transporter 1 (614 aa).

The helical transmembrane segment at 6 to 26 threads the bilayer; sequence GVVSIVLFYLLILVVGIWAGR. The Cytoplasmic segment spans residues 27 to 44; it reads KKQSGNDSEEEVMLAGRS. Residues 45–65 traverse the membrane as a helical segment; that stretch reads IGLFVGIFTMTATWVGGGYIN. At 66–75 the chain is on the extracellular side; sequence GTAEAIYTSG. Residues 76 to 96 form a helical membrane-spanning segment; sequence LVWCQAPFGYALSLVFGGIFF. The Cytoplasmic portion of the chain corresponds to 97–119; that stretch reads ANPMRKQGYITMLDPLQDSFGER. Residues 120 to 140 form a helical membrane-spanning segment; that stretch reads MGGLLFLPALCGEVFWAAGIL. Residues 141–158 lie on the Extracellular side of the membrane; it reads AALGATLSVIIDMDHRTS. The helical transmembrane segment at 159 to 179 threads the bilayer; that stretch reads VILSSCIAIFYTLFGGLYSVA. The Cytoplasmic portion of the chain corresponds to 180 to 185; that stretch reads YTDVIQ. The chain crosses the membrane as a helical span at residues 186 to 206; that stretch reads LFCIFIGLWMCIPFAWSNEHV. The Extracellular segment spans residues 207–225; sequence GSLSDLEVDWIGHVEPKKH. Residues 226–246 form a helical membrane-spanning segment; the sequence is WLYIDYGLLLVFGGIPWQVYF. Over 247 to 262 the chain is Cytoplasmic; that stretch reads QRVLSSKTAGRAQLLS. A helical membrane pass occupies residues 263-283; sequence YVAAAGCILMAIPPVLIGAIA. Over 284-305 the chain is Extracellular; it reads KATPWNETDYKGPYPLTVDETS. The N-linked (GlcNAc...) asparagine glycan is linked to asparagine 289. The helical transmembrane segment at 306-326 threads the bilayer; the sequence is MILPMVLQYLTPDFVSFFGLG. The Cytoplasmic portion of the chain corresponds to 327 to 364; sequence AVSAAVMSSADSSVLSAASMFARNVYKLIFRQKASEME. Residues 365-385 traverse the membrane as a helical segment; the sequence is IIWVMRVAIIVVGILATIMAL. Over 386 to 394 the chain is Extracellular; the sequence is TIPSIYGLW. A helical transmembrane segment spans residues 395 to 415; it reads SMCSDLVYVILFPQLLMVVHF. Topologically, residues 416-424 are cytoplasmic; the sequence is KKHCNTYGS. Residues 425 to 445 form a helical membrane-spanning segment; that stretch reads LSAYIVALAIRLSGGEAILGL. Residues 446–467 are Extracellular-facing; the sequence is APLIKYPGYDEETKEQMFPFRT. The helical transmembrane segment at 468–488 threads the bilayer; that stretch reads MAMLLSLVTLISVSWWTKMMF. Residues 489-614 are Cytoplasmic-facing; it reads ESGKLPPSYD…PTAEQDNTAF (126 aa). A disordered region spans residues 583–614; sequence ATGVKPSGGGGGHLQSQSGMAMPTAEQDNTAF.

The protein belongs to the sodium:solute symporter (SSF) (TC 2.A.21) family.

It is found in the membrane. In terms of biological role, imports choline from the extracellular space to the neuron with high affinity. Rate-limiting step in acetylcholine synthesis. Sodium ion and chloride ion dependent. The sequence is that of High-affinity choline transporter 1 from Drosophila melanogaster (Fruit fly).